Reading from the N-terminus, the 569-residue chain is Isocitrate dehydrogenase kinase/phosphatase (569 aa).

ATP contacts are provided by residues 316–322 (APGVRGM) and Lys337. Residue Asp372 is part of the active site.

The protein belongs to the AceK family.

It localises to the cytoplasm. It carries out the reaction L-seryl-[isocitrate dehydrogenase] + ATP = O-phospho-L-seryl-[isocitrate dehydrogenase] + ADP + H(+). Functionally, bifunctional enzyme which can phosphorylate or dephosphorylate isocitrate dehydrogenase (IDH) on a specific serine residue. This is a regulatory mechanism which enables bacteria to bypass the Krebs cycle via the glyoxylate shunt in response to the source of carbon. When bacteria are grown on glucose, IDH is fully active and unphosphorylated, but when grown on acetate or ethanol, the activity of IDH declines drastically concomitant with its phosphorylation. The chain is Isocitrate dehydrogenase kinase/phosphatase from Pseudomonas putida (strain W619).